Consider the following 130-residue polypeptide: Gonadotropin subunit beta-1 (130 aa).

An N-terminal signal peptide occupies residues 1–18 (MRMHFVVMVMLLPALMMA). Disulfide bonds link C26–C74, C40–C89, C51–C105, C55–C107, and C110–C117. N30 carries N-linked (GlcNAc...) asparagine glycosylation.

This sequence belongs to the glycoprotein hormones subunit beta family. Heterodimer of an alpha and a beta chain.

The protein localises to the secreted. Functionally, involved in gametogenesis and steroidogenesis. The protein is Gonadotropin subunit beta-1 (cgba) of Cyprinus carpio (Common carp).